The following is a 1406-amino-acid chain: Protein crumbs homolog 1 (1406 aa).

A signal peptide spans 1-25; sequence MALKNINYLLIFYLSFSLLIYIKNS. Topologically, residues 26 to 1347 are extracellular; the sequence is FCNKNNTRCL…DDLISDIFTT (1322 aa). Residues Asn-30, Asn-41, and Asn-42 are each glycosylated (N-linked (GlcNAc...) asparagine). 3 consecutive EGF-like domains span residues 30-68, 70-108, and 110-146; these read NNTR…KDCD, MKDP…TICE, and TIGS…RFCE. 20 disulfides stabilise this stretch: Cys-34-Cys-45, Cys-39-Cys-54, Cys-56-Cys-67, Cys-74-Cys-85, Cys-79-Cys-96, Cys-98-Cys-107, Cys-114-Cys-125, Cys-119-Cys-134, Cys-136-Cys-145, Cys-152-Cys-163, Cys-157-Cys-172, Cys-174-Cys-183, Cys-190-Cys-201, Cys-195-Cys-210, Cys-212-Cys-221, Cys-228-Cys-239, Cys-233-Cys-248, Cys-250-Cys-259, Cys-266-Cys-277, and Cys-271-Cys-286. The EGF-like 4; calcium-binding domain occupies 148–184; that stretch reads DHDECASSPCQNGAVCQDGIDGYSCFCVPGYQGRHCD. The region spanning 186 to 222 is the EGF-like 5; calcium-binding domain; that stretch reads EVDECASDPCKNEATCLNEIGRYTCICPHNYSGVNCE. Asn-215 carries N-linked (GlcNAc...) asparagine glycosylation. Residues 224–260 form the EGF-like 6; calcium-binding domain; the sequence is EIDECWSQPCLNGATCQDALGAYFCDCAPGFLGDHCE. The region spanning 262–299 is the EGF-like 7; calcium-binding domain; the sequence is NTDECASQPCLHGGLCVDGENRYSCNCTGSGFTGTHCE. A glycan (N-linked (GlcNAc...) asparagine) is linked at Asn-287. 13 disulfides stabilise this stretch: Cys-288–Cys-298, Cys-305–Cys-316, Cys-310–Cys-325, Cys-327–Cys-336, Cys-343–Cys-354, Cys-348–Cys-383, Cys-385–Cys-394, Cys-401–Cys-412, Cys-406–Cys-421, Cys-423–Cys-438, Cys-445–Cys-456, Cys-450–Cys-469, and Cys-471–Cys-480. EGF-like domains follow at residues 301 to 337 and 339 to 395; these read LMPL…AQCE and DLNE…IHCE. Asn-313 and Asn-322 each carry an N-linked (GlcNAc...) asparagine glycan. The EGF-like 10; calcium-binding domain occupies 397–439; the sequence is DVNECSSNPCQNGGTCENLPGNYTCHCPFDNLSRTFYGGRDCS. N-linked (GlcNAc...) asparagine glycosylation is found at Asn-418, Asn-427, and Asn-453. An EGF-like 11 domain is found at 441 to 481; that stretch reads ILLGCTHQQCLNNGTCIPHFQDGQHGFSCLCPSGYTGSLCE. The Laminin G-like 1 domain occupies 485-670; that stretch reads TLSFEGDGFL…GSSLNVKAGC (186 aa). Asn-550, Asn-561, and Asn-657 each carry an N-linked (GlcNAc...) asparagine glycan. Cystine bridges form between Cys-642–Cys-670, Cys-676–Cys-687, Cys-681–Cys-696, and Cys-698–Cys-707. An EGF-like 12 domain is found at 672 to 708; sequence RKDWCESQPCQSRGRCINLWLSYQCDCHRPYEGPNCL. The 172-residue stretch at 714-885 folds into the Laminin G-like 2 domain; that stretch reads GRFGQDDSTG…PVLVNVTQGC (172 aa). Asn-757, Asn-871, and Asn-880 each carry an N-linked (GlcNAc...) asparagine glycan. 6 disulfide bridges follow: Cys-851–Cys-885, Cys-891–Cys-902, Cys-896–Cys-911, Cys-913–Cys-922, Cys-928–Cys-939, and Cys-933–Cys-948. 2 EGF-like domains span residues 887-923 and 924-960; these read GDNS…KACE and EVQW…QSGQ. Residues 950-1137 enclose the Laminin G-like 3 domain; sequence ANAVFNGQSG…ISTNSVVTGC (188 aa). Asn-968, Asn-975, and Asn-1000 each carry an N-linked (GlcNAc...) asparagine glycan. 16 disulfide bridges follow: Cys-1096–Cys-1137, Cys-1143–Cys-1154, Cys-1148–Cys-1163, Cys-1165–Cys-1174, Cys-1181–Cys-1191, Cys-1186–Cys-1200, Cys-1202–Cys-1211, Cys-1218–Cys-1229, Cys-1223–Cys-1238, Cys-1240–Cys-1249, Cys-1259–Cys-1274, Cys-1268–Cys-1283, Cys-1285–Cys-1294, Cys-1301–Cys-1312, Cys-1306–Cys-1321, and Cys-1323–Cys-1332. The EGF-like 15 domain maps to 1139–1175; that stretch reads QLNVCNSNPCLHGGNCEDIYSSYHCSCPLGWSGKHCE. The EGF-like 16; calcium-binding domain maps to 1177 to 1212; the sequence is NIDECFSNPCIHGNCSDRVAAYHCTCEPGYTGVNCE. Asn-1190 carries an N-linked (GlcNAc...) asparagine glycan. EGF-like domains are found at residues 1214–1250 and 1255–1295; these read DIDN…KFCR and PSTV…EWCE. N-linked (GlcNAc...) asparagine glycans are attached at residues Asn-1243, Asn-1265, and Asn-1273. An EGF-like 19; calcium-binding domain is found at 1297-1333; that stretch reads DIDECASDPCVNGGLCQDLLNKFQCLCDVAFAGERCE. A helical transmembrane segment spans residues 1348-1368; that stretch reads IGSVTVALLLILLLAIVASVV. The Cytoplasmic segment spans residues 1369-1406; the sequence is TSNKRATQGTYSPSRQEKEGSRVEMWNLMPPPAMERLI. Residues 1370 to 1406 form an interaction with EPB41L5 region; it reads SNKRATQGTYSPSRQEKEGSRVEMWNLMPPPAMERLI.

The protein belongs to the Crumbs protein family. As to quaternary structure, component of a complex composed of PALS1, CRB1 and EPB41L5. Within the complex, interacts (via intracellular domain) with PALS1 and EPB41L5 (via FERM domain). Forms a complex with MPP4 and PALS1. Interacts with MPDZ/MUPP1 and MPP4. Extensively glycosylated. In terms of tissue distribution, preferential expression in retina, also expressed in brain, testis, fetal brain and fetal eye. Expressed at the outer limiting membrane and apical to adherens junctions in the retina.

Its subcellular location is the apical cell membrane. It localises to the secreted. The protein localises to the cell projection. It is found in the cilium. The protein resides in the photoreceptor outer segment. Its subcellular location is the photoreceptor inner segment. Its function is as follows. Plays a role in photoreceptor morphogenesis in the retina. May maintain cell polarization and adhesion. The polypeptide is Protein crumbs homolog 1 (Homo sapiens (Human)).